The following is a 348-amino-acid chain: 3-isopropylmalate dehydrogenase (348 aa).

76–87 (GPKWTDPNNRPE) is an NAD(+) binding site. R94, R104, R132, and D217 together coordinate substrate. D217, D241, and D245 together coordinate Mg(2+). 275–287 (GSAPDIAGKNVAN) contributes to the NAD(+) binding site.

It belongs to the isocitrate and isopropylmalate dehydrogenases family. LeuB type 1 subfamily. Homodimer. Mg(2+) serves as cofactor. Mn(2+) is required as a cofactor.

Its subcellular location is the cytoplasm. It carries out the reaction (2R,3S)-3-isopropylmalate + NAD(+) = 4-methyl-2-oxopentanoate + CO2 + NADH. It functions in the pathway amino-acid biosynthesis; L-leucine biosynthesis; L-leucine from 3-methyl-2-oxobutanoate: step 3/4. Functionally, catalyzes the oxidation of 3-carboxy-2-hydroxy-4-methylpentanoate (3-isopropylmalate) to 3-carboxy-4-methyl-2-oxopentanoate. The product decarboxylates to 4-methyl-2 oxopentanoate. This chain is 3-isopropylmalate dehydrogenase, found in Staphylococcus aureus (strain bovine RF122 / ET3-1).